A 160-amino-acid polypeptide reads, in one-letter code: XSQLTKDEIEEVREVFDLFDFWDGRDGDVDAAKVGDLLRCLGMNPTEAQVHQHGGTKKMGEKAYKLEEILPIYEEMSSKDTGTAADEFMEAFKTFDREGQGLISSAEIRNVLKMLGERITEDQCNDIFTFCDIREDIDGNIKYEDLMKKVMAGPFPDKSD.

Xaa-1 carries the blocked amino end (Xaa) modification. EF-hand domains follow at residues Asp-7–Asn-44, Thr-83–Arg-118, and Ile-119–Gly-153.

Functionally, in molluscan muscle, calcium regulation is associated with myosin rather than with actin. Muscle myosin contains two types of light chains: the catalytic light chain, essential for ATPase activity, and the regulatory light chain, a calcium-binding protein responsible for Ca(2+) dependent binding and Ca(2+) dependent Mg-ATPase activity. The protein is Myosin catalytic light chain LC-1, mantle muscle of Todarodes pacificus (Japanese flying squid).